A 219-amino-acid chain; its full sequence is Germin-like protein subfamily 2 member 1 (219 aa).

Residues M1 to S21 form the signal peptide. Cysteines 32 and 47 form a disulfide. The Cupin type-1 domain occupies Q61–K209. A glycan (N-linked (GlcNAc...) asparagine) is linked at N70. Mn(2+)-binding residues include H109, H111, E116, and H155.

The protein belongs to the germin family. Oligomer (believed to be a pentamer but probably hexamer).

The protein resides in the secreted. It is found in the extracellular space. The protein localises to the apoplast. Its function is as follows. May play a role in plant defense. Probably has no oxalate oxidase activity even if the active site is conserved. The polypeptide is Germin-like protein subfamily 2 member 1 (GLP4) (Arabidopsis thaliana (Mouse-ear cress)).